We begin with the raw amino-acid sequence, 248 residues long: MICTFLRAVQYTEKLHRSSAKRLLLPYIVLNKACLKTEPSLRCGLQYQKKTLRPRCILGVTQKTIWTQGPSPRKAKEDGSKQVSVHRSQRGGTAVPTSQKVKEAGRDFTYLIVVLFGISITGGLFYTIFKELFSSSSPSKIYGRALEKCRSHPEVIGVFGESVKGYGEVTRRGRRQHVRFTEYVKDGLKHTCVKFYIEGSEPGKQGTVYAQVKENPGSGEYDFRYIFVEIESYPRRTIIIEDNRSQDD.

Residues M1–S18 constitute a mitochondrion transit peptide. The interval T67–S98 is disordered. Residues F108 to I128 form a helical membrane-spanning segment.

Belongs to the TIM21 family. As to quaternary structure, component of the TIM23 complex. Component of the MITRAC (mitochondrial translation regulation assembly intermediate of cytochrome c oxidase complex) complex, the core components of this complex being COA3/MITRAC12 and COX14. Interacts with COA3 and MT-CO1/COX1.

The protein localises to the mitochondrion membrane. Functionally, participates in the translocation of transit peptide-containing proteins across the mitochondrial inner membrane. Also required for assembly of mitochondrial respiratory chain complex I and complex IV as component of the MITRAC (mitochondrial translation regulation assembly intermediate of cytochrome c oxidase complex) complex. Probably shuttles between the presequence translocase and respiratory-chain assembly intermediates in a process that promotes incorporation of early nuclear-encoded subunits into these complexes. The polypeptide is Mitochondrial import inner membrane translocase subunit Tim21 (TIMM21) (Homo sapiens (Human)).